The following is a 148-amino-acid chain: Inner membrane protein YccF (148 aa).

Topologically, residues 1-14 (MRTVLNILNFVLGG) are periplasmic. Residues 15-37 (FATTLGWLLATLVSIVLIFTLPL) form a helical membrane-spanning segment. Over 38 to 76 (TRSCWEITKLSLVPYGNEAIHVDELNPAGKNVLLNTGGT) the chain is Cytoplasmic. A helical membrane pass occupies residues 77 to 99 (VLNIFWLIFFGWWLCLMHIATGI). The Periplasmic segment spans residues 100–102 (AQC). The chain crosses the membrane as a helical span at residues 103 to 125 (ISIIGIPVGIANFKIAAIALWPV). The Cytoplasmic segment spans residues 126-148 (GRRVVSVETAQAAREANARRRFE).

It is found in the cell inner membrane. In Escherichia coli (strain K12), this protein is Inner membrane protein YccF (yccF).